A 326-amino-acid polypeptide reads, in one-letter code: Biotin synthase (326 aa).

In terms of domain architecture, Radical SAM core spans asparagine 42–alanine 266. Cysteine 57, cysteine 61, and cysteine 64 together coordinate [4Fe-4S] cluster. Cysteine 101, cysteine 132, cysteine 192, and arginine 264 together coordinate [2Fe-2S] cluster.

It belongs to the radical SAM superfamily. Biotin synthase family. As to quaternary structure, homodimer. The cofactor is [4Fe-4S] cluster. [2Fe-2S] cluster is required as a cofactor.

It catalyses the reaction (4R,5S)-dethiobiotin + (sulfur carrier)-SH + 2 reduced [2Fe-2S]-[ferredoxin] + 2 S-adenosyl-L-methionine = (sulfur carrier)-H + biotin + 2 5'-deoxyadenosine + 2 L-methionine + 2 oxidized [2Fe-2S]-[ferredoxin]. The protein operates within cofactor biosynthesis; biotin biosynthesis; biotin from 7,8-diaminononanoate: step 2/2. Its function is as follows. Catalyzes the conversion of dethiobiotin (DTB) to biotin by the insertion of a sulfur atom into dethiobiotin via a radical-based mechanism. The protein is Biotin synthase of Ehrlichia chaffeensis (strain ATCC CRL-10679 / Arkansas).